We begin with the raw amino-acid sequence, 367 residues long: Aurora kinase (367 aa).

Residues 30–49 (TTATNGAPPQARVQPGKGYR) are disordered. Positions 109–360 (FEIGKVLGKG…LKEVKKHPWI (252 aa)) constitute a Protein kinase domain. ATP contacts are provided by residues 115 to 123 (LGKGKFGRV) and K138. The Proton acceptor role is filled by D232.

It belongs to the protein kinase superfamily. Ser/Thr protein kinase family. Aurora subfamily.

Its subcellular location is the nucleus. It localises to the cytoplasm. It is found in the cytoskeleton. The protein resides in the spindle. The protein localises to the chromosome. Its subcellular location is the centromere. It localises to the kinetochore. The catalysed reaction is L-seryl-[protein] + ATP = O-phospho-L-seryl-[protein] + ADP + H(+). It carries out the reaction L-threonyl-[protein] + ATP = O-phospho-L-threonyl-[protein] + ADP + H(+). Component of the chromosomal passenger complex (CPC), a complex that acts as a key regulator of chromosome segregation and cytokinesis. Has a role in error-correction of aberrent kinetochore-microtubule attachments to ensure that sister kinetochores become bioriented and connect to opposite poles by promoting spindle assembly checkpoint signaling. The sequence is that of Aurora kinase (IPL1) from Eremothecium gossypii (strain ATCC 10895 / CBS 109.51 / FGSC 9923 / NRRL Y-1056) (Yeast).